Here is a 534-residue protein sequence, read N- to C-terminus: N-acetylglutamate synthase, mitochondrial (534 aa).

A mitochondrion-targeting transit peptide spans M1–R18. Residues L19–R99 are disordered. The interval L19–R376 is amino-acid kinase domain (AAK). The segment covering V81–P96 has biased composition (pro residues). The N-acetyltransferase domain occupies E375–H526. Substrate contacts are provided by residues K401, K444, and R474–N479.

The protein belongs to the acetyltransferase family. Homodimer. Homotetramer. Probably processed by mitochondrial processing peptidase (MPP). The long form has not yet been isolated. In terms of tissue distribution, highly expressed in the adult liver, kidney and small intestine. Weakly expressed in the fetal liver, lung, pancreas, placenta, heart and brain tissue.

It is found in the mitochondrion matrix. The catalysed reaction is L-glutamate + acetyl-CoA = N-acetyl-L-glutamate + CoA + H(+). It participates in amino-acid biosynthesis; L-arginine biosynthesis; N(2)-acetyl-L-ornithine from L-glutamate: step 1/4. Its activity is regulated as follows. Increased by L-arginine. Functionally, plays a role in the regulation of ureagenesis by producing the essential cofactor N-acetylglutamate (NAG), thus modulating carbamoylphosphate synthase I (CPS1) activity. In Homo sapiens (Human), this protein is N-acetylglutamate synthase, mitochondrial (NAGS).